Reading from the N-terminus, the 369-residue chain is DNA replication and repair protein RecF (369 aa).

30 to 37 provides a ligand contact to ATP; that stretch reads GDNAQGKT.

This sequence belongs to the RecF family.

It is found in the cytoplasm. The RecF protein is involved in DNA metabolism; it is required for DNA replication and normal SOS inducibility. RecF binds preferentially to single-stranded, linear DNA. It also seems to bind ATP. The protein is DNA replication and repair protein RecF of Streptococcus equi subsp. zooepidemicus (strain H70).